A 137-amino-acid polypeptide reads, in one-letter code: Nucleoside diphosphate kinase (137 aa).

Positions 9, 57, 85, 91, 102, and 112 each coordinate ATP. The active-site Pros-phosphohistidine intermediate is H115.

Belongs to the NDK family. Homotetramer. Requires Mg(2+) as cofactor.

It localises to the cytoplasm. The catalysed reaction is a 2'-deoxyribonucleoside 5'-diphosphate + ATP = a 2'-deoxyribonucleoside 5'-triphosphate + ADP. The enzyme catalyses a ribonucleoside 5'-diphosphate + ATP = a ribonucleoside 5'-triphosphate + ADP. Major role in the synthesis of nucleoside triphosphates other than ATP. The ATP gamma phosphate is transferred to the NDP beta phosphate via a ping-pong mechanism, using a phosphorylated active-site intermediate. This is Nucleoside diphosphate kinase from Geobacter sp. (strain M21).